Consider the following 152-residue polypeptide: D-aminoacyl-tRNA deacylase (152 aa).

The Gly-cisPro motif, important for rejection of L-amino acids motif lies at 142–143 (GP).

It belongs to the DTD family. Homodimer.

Its subcellular location is the cytoplasm. The enzyme catalyses glycyl-tRNA(Ala) + H2O = tRNA(Ala) + glycine + H(+). The catalysed reaction is a D-aminoacyl-tRNA + H2O = a tRNA + a D-alpha-amino acid + H(+). Functionally, an aminoacyl-tRNA editing enzyme that deacylates mischarged D-aminoacyl-tRNAs. Also deacylates mischarged glycyl-tRNA(Ala), protecting cells against glycine mischarging by AlaRS. Acts via tRNA-based rather than protein-based catalysis; rejects L-amino acids rather than detecting D-amino acids in the active site. By recycling D-aminoacyl-tRNA to D-amino acids and free tRNA molecules, this enzyme counteracts the toxicity associated with the formation of D-aminoacyl-tRNA entities in vivo and helps enforce protein L-homochirality. In Burkholderia ambifaria (strain ATCC BAA-244 / DSM 16087 / CCUG 44356 / LMG 19182 / AMMD) (Burkholderia cepacia (strain AMMD)), this protein is D-aminoacyl-tRNA deacylase.